The chain runs to 417 residues: Equilibrative nucleotide transporter 7 (417 aa).

Transmembrane regions (helical) follow at residues 19–39 (LVCCFLGVGSLVAWNAMLTIT), 54–74 (VLTIVYQLVANVFIITLATKE), 84–104 (IFGYSLYTAGTFCLIILDLAS), 110–130 (VVAYVLLCLIVALFGLADAFV), 143–163 (PDFIQAFMAGLGIAGALTSVL), 184–204 (LFIGIATLIELACVFLYTLVF), 264–284 (LGINLSLIYVVTLSIFPGFLY), 293–315 (GDWYAPVLVAMYNGWDAISRFIP), 326–346 (KWITVCVVARLLLVPAFYFTA), 353–373 (WMLFLTSFLGLSNGYLTVCIF), and 392–412 (MCVFLLGGIFAGVCLGWLWLI).

This sequence belongs to the SLC29A/ENT transporter (TC 2.A.57) family. In terms of tissue distribution, expressed in leaves and flowers.

The protein localises to the cell membrane. In terms of biological role, nucleoside transporter that can mediate uptake of adenosine, uridine, guanosine or cytidine when expressed in a heterologous system (yeast). The polypeptide is Equilibrative nucleotide transporter 7 (ENT7) (Arabidopsis thaliana (Mouse-ear cress)).